The chain runs to 412 residues: MAGNNSGGGSYPLDDHVKSVARDLQHRFAQMSNRDQKFDLHVIPDLLSQPVVPEPPAQDDKEAQNFEKYLIAMSHIPLNYENPGLLDEALQQIPLDRLSQEAEEEVELFQAKAASLGRSKPEWSHQECMVRALLRWFRRSFFTFVNNPPCSECLSPTNKIRNVAPTPEERAHSATWVELYACVTCGAYERFPRYTEAWQLLRVKRGRAGDFANVFTMLCRALDIRARWVWCQEDYLWTEIYSEHQQRWVHVDSCEEAWDMPHMYYKNWGKKMSYVIAFSREGAVDVTRRYVGSPDALLPRTRCPEGVLKFIMEEITNLHRPKYAPDGETRLRLYREDVAEDVQLRSLWSATLEQSRRLKAAAAAAARGGRSSPDNKSGANMMGSPATGDIKRPIPEDAPVPDVPSLWPTYGP.

Residues cysteine 150, cysteine 153, cysteine 182, and cysteine 185 each coordinate Zn(2+). Residues 363–412 (AAAARGGRSSPDNKSGANMMGSPATGDIKRPIPEDAPVPDVPSLWPTYGP) are disordered.

This sequence belongs to the transglutaminase-like superfamily. PNGase family.

The polypeptide is Protein png-1 (un-7) (Neurospora crassa (strain ATCC 24698 / 74-OR23-1A / CBS 708.71 / DSM 1257 / FGSC 987)).